Consider the following 110-residue polypeptide: Phosphoribosyl-ATP pyrophosphatase (110 aa).

The protein belongs to the PRA-PH family.

The protein localises to the cytoplasm. It catalyses the reaction 1-(5-phospho-beta-D-ribosyl)-ATP + H2O = 1-(5-phospho-beta-D-ribosyl)-5'-AMP + diphosphate + H(+). It participates in amino-acid biosynthesis; L-histidine biosynthesis; L-histidine from 5-phospho-alpha-D-ribose 1-diphosphate: step 2/9. The sequence is that of Phosphoribosyl-ATP pyrophosphatase from Lacticaseibacillus casei (strain BL23) (Lactobacillus casei).